The chain runs to 77 residues: Large ribosomal subunit protein bL28 (77 aa).

It belongs to the bacterial ribosomal protein bL28 family.

In Laribacter hongkongensis (strain HLHK9), this protein is Large ribosomal subunit protein bL28.